The sequence spans 479 residues: Bifunctional protein HldE (479 aa).

Residues M1–T322 are ribokinase. N198–E201 contacts ATP. Residue D267 is part of the active site. A cytidylyltransferase region spans residues F347 to S479.

This sequence in the N-terminal section; belongs to the carbohydrate kinase PfkB family. In the C-terminal section; belongs to the cytidylyltransferase family. In terms of assembly, homodimer.

It carries out the reaction D-glycero-beta-D-manno-heptose 7-phosphate + ATP = D-glycero-beta-D-manno-heptose 1,7-bisphosphate + ADP + H(+). It catalyses the reaction D-glycero-beta-D-manno-heptose 1-phosphate + ATP + H(+) = ADP-D-glycero-beta-D-manno-heptose + diphosphate. It functions in the pathway nucleotide-sugar biosynthesis; ADP-L-glycero-beta-D-manno-heptose biosynthesis; ADP-L-glycero-beta-D-manno-heptose from D-glycero-beta-D-manno-heptose 7-phosphate: step 1/4. Its pathway is nucleotide-sugar biosynthesis; ADP-L-glycero-beta-D-manno-heptose biosynthesis; ADP-L-glycero-beta-D-manno-heptose from D-glycero-beta-D-manno-heptose 7-phosphate: step 3/4. Catalyzes the phosphorylation of D-glycero-D-manno-heptose 7-phosphate at the C-1 position to selectively form D-glycero-beta-D-manno-heptose-1,7-bisphosphate. Its function is as follows. Catalyzes the ADP transfer from ATP to D-glycero-beta-D-manno-heptose 1-phosphate, yielding ADP-D-glycero-beta-D-manno-heptose. This is Bifunctional protein HldE from Gluconobacter oxydans (strain 621H) (Gluconobacter suboxydans).